The sequence spans 123 residues: Large ribosomal subunit protein bL12 (123 aa).

The protein belongs to the bacterial ribosomal protein bL12 family. Homodimer. Part of the ribosomal stalk of the 50S ribosomal subunit. Forms a multimeric L10(L12)X complex, where L10 forms an elongated spine to which 2 to 4 L12 dimers bind in a sequential fashion. Binds GTP-bound translation factors.

Its function is as follows. Forms part of the ribosomal stalk which helps the ribosome interact with GTP-bound translation factors. Is thus essential for accurate translation. This Acinetobacter baumannii (strain AB307-0294) protein is Large ribosomal subunit protein bL12.